A 439-amino-acid chain; its full sequence is Dolichyl-diphosphooligosaccharide--protein glycosyltransferase 48 kDa subunit (439 aa).

Residues 1–25 (MELGAAARAWSLLWLLLPLLGLVGA) form the signal peptide. Residues 27 to 410 (GPRTLVLLDN…YERFIPSAYP (384 aa)) lie on the Lumenal side of the membrane. A helical transmembrane segment spans residues 411-430 (YYASAFSMMVGLFIFSVVFL). Topologically, residues 431–439 (HMKEKEKSD) are cytoplasmic.

The protein belongs to the DDOST 48 kDa subunit family. Component of the oligosaccharyltransferase (OST) complex. OST exists in two different complex forms which contain common core subunits RPN1, RPN2, OST48, OST4, DAD1 and TMEM258, either STT3A or STT3B as catalytic subunits, and form-specific accessory subunits. STT3A complex assembly occurs through the formation of 3 subcomplexes. Subcomplex 1 contains RPN1 and TMEM258, subcomplex 2 contains the STT3A-specific subunits STT3A, DC2/OSTC, and KCP2 as well as the core subunit OST4, and subcomplex 3 contains RPN2, DAD1, and OST48. The STT3A complex can form stable complexes with the Sec61 complex or with both the Sec61 and TRAP complexes. Interacts with SMIM22.

Its subcellular location is the endoplasmic reticulum membrane. It participates in protein modification; protein glycosylation. Its function is as follows. Subunit of the oligosaccharyl transferase (OST) complex that catalyzes the initial transfer of a defined glycan (Glc(3)Man(9)GlcNAc(2) in eukaryotes) from the lipid carrier dolichol-pyrophosphate to an asparagine residue within an Asn-X-Ser/Thr consensus motif in nascent polypeptide chains, the first step in protein N-glycosylation. N-glycosylation occurs cotranslationally and the complex associates with the Sec61 complex at the channel-forming translocon complex that mediates protein translocation across the endoplasmic reticulum (ER). All subunits are required for a maximal enzyme activity. Required for the assembly of both SST3A- and SS3B-containing OST complexes. This Sus scrofa (Pig) protein is Dolichyl-diphosphooligosaccharide--protein glycosyltransferase 48 kDa subunit.